The primary structure comprises 126 residues: Small ribosomal subunit protein uS13 (126 aa).

The tract at residues 94–126 (RNLPVHGQRTHTNARTRKGPRRAIAGKKKAGKK) is disordered.

This sequence belongs to the universal ribosomal protein uS13 family. In terms of assembly, part of the 30S ribosomal subunit. Forms a loose heterodimer with protein S19. Forms two bridges to the 50S subunit in the 70S ribosome.

Its function is as follows. Located at the top of the head of the 30S subunit, it contacts several helices of the 16S rRNA. In the 70S ribosome it contacts the 23S rRNA (bridge B1a) and protein L5 of the 50S subunit (bridge B1b), connecting the 2 subunits; these bridges are implicated in subunit movement. Contacts the tRNAs in the A and P-sites. The polypeptide is Small ribosomal subunit protein uS13 (Parafrankia sp. (strain EAN1pec)).